The sequence spans 303 residues: UDP-3-O-acyl-N-acetylglucosamine deacetylase (303 aa).

Zn(2+) is bound by residues His-78, His-237, and Asp-241. The active-site Proton donor is His-264.

It belongs to the LpxC family. Zn(2+) serves as cofactor.

The enzyme catalyses a UDP-3-O-[(3R)-3-hydroxyacyl]-N-acetyl-alpha-D-glucosamine + H2O = a UDP-3-O-[(3R)-3-hydroxyacyl]-alpha-D-glucosamine + acetate. It participates in glycolipid biosynthesis; lipid IV(A) biosynthesis; lipid IV(A) from (3R)-3-hydroxytetradecanoyl-[acyl-carrier-protein] and UDP-N-acetyl-alpha-D-glucosamine: step 2/6. Catalyzes the hydrolysis of UDP-3-O-myristoyl-N-acetylglucosamine to form UDP-3-O-myristoylglucosamine and acetate, the committed step in lipid A biosynthesis. This is UDP-3-O-acyl-N-acetylglucosamine deacetylase from Xanthomonas campestris pv. campestris (strain B100).